Consider the following 179-residue polypeptide: ATP-dependent protease subunit HslV (179 aa).

T8 is an active-site residue. Na(+) contacts are provided by G163, C166, and T169.

This sequence belongs to the peptidase T1B family. HslV subfamily. A double ring-shaped homohexamer of HslV is capped on each side by a ring-shaped HslU homohexamer. The assembly of the HslU/HslV complex is dependent on binding of ATP.

It is found in the cytoplasm. The catalysed reaction is ATP-dependent cleavage of peptide bonds with broad specificity.. Allosterically activated by HslU binding. Protease subunit of a proteasome-like degradation complex believed to be a general protein degrading machinery. The protein is ATP-dependent protease subunit HslV of Solibacter usitatus (strain Ellin6076).